A 426-amino-acid polypeptide reads, in one-letter code: Glutamate-1-semialdehyde 2,1-aminomutase (426 aa).

An N6-(pyridoxal phosphate)lysine modification is found at Lys265.

Belongs to the class-III pyridoxal-phosphate-dependent aminotransferase family. HemL subfamily. In terms of assembly, homodimer. Pyridoxal 5'-phosphate serves as cofactor.

The protein localises to the cytoplasm. The enzyme catalyses (S)-4-amino-5-oxopentanoate = 5-aminolevulinate. The protein operates within porphyrin-containing compound metabolism; protoporphyrin-IX biosynthesis; 5-aminolevulinate from L-glutamyl-tRNA(Glu): step 2/2. This is Glutamate-1-semialdehyde 2,1-aminomutase from Hydrogenovibrio crunogenus (strain DSM 25203 / XCL-2) (Thiomicrospira crunogena).